Here is a 328-residue protein sequence, read N- to C-terminus: UPF0324 membrane protein AF_1621 (328 aa).

Transmembrane regions (helical) follow at residues 21 to 39 (LQMLLLLLLCGAAAYIINL), 43 to 60 (ALEPLFLALVFGIVAGNL), 73 to 95 (YVPFLLPIGITLYGVNINIPYLG), 101 to 123 (IVAATLISTSLIFLTVFWLSSRL), 130 to 152 (SILLACGSGICGVSAIAIISPLI), 162 to 184 (AIMIITAVGLTGAILYPSIAHYA), 191 to 213 (FAVLAGATLHQTGIVKISSQLFG), 223 to 240 (GIRIAMIALVVLILSIIY), 245 to 267 (FYVPWYIVSFLGVALFSSTYLPG), 271 to 293 (QALRPLATVMFATTLAAICYTVN), and 305 to 327 (LFASYAGWAVGVAFVLLLLGSGA).

The protein belongs to the UPF0324 family.

Its subcellular location is the cell membrane. This is UPF0324 membrane protein AF_1621 from Archaeoglobus fulgidus (strain ATCC 49558 / DSM 4304 / JCM 9628 / NBRC 100126 / VC-16).